The following is an 849-amino-acid chain: Envelope glycoprotein gp160 (849 aa).

Positions M1–D31 are cleaved as a signal peptide. Topologically, residues N32–I670 are extracellular. Residues C53 and C73 are joined by a disulfide bond. Residues N87, N129, N137, N142, N153, N185, N195, N232, N239, N260, N274, N287, N299, N329, N341, N354, and N358 are each glycosylated (N-linked (GlcNAc...) asparagine; by host). 5 disulfide bridges follow: C118–C203, C125–C194, C130–C154, C216–C245, and C226–C237. The segment at C130–N153 is V1. Positions C154–C194 are V2. The V3 stretch occupies residues C294–H327. The cysteines at positions 294 and 328 are disulfide-linked. A CD4-binding loop region spans residues S360–H370. Intrachain disulfides connect C374–C430 and C381–C403. The tract at residues C381–C403 is V4. N-linked (GlcNAc...) asparagine; by host glycans are attached at residues N382, N390, N396, N433, and N447. V5 stretches follow at residues N446–G457 and D448–G457. Positions A498–A518 are fusion peptide. Positions K560 to L578 are immunosuppression. An intrachain disulfide couples C584 to C590. N-linked (GlcNAc...) asparagine; by host glycans are attached at residues N597, N602, N611, and N623. Residues R619–A653 are a coiled coil. Residues A648–R669 are MPER; binding to GalCer. The helical transmembrane segment at F671–V691 threads the bilayer. The Cytoplasmic segment spans residues N692–L849. Residues Y698–L701 carry the YXXL motif; contains endocytosis signal motif. A disordered region spans residues H709–D729. C750 is lipidated: S-palmitoyl cysteine; by host. The Di-leucine internalization motif motif lies at L848–L849.

The protein belongs to the HIV-1 env protein family. As to quaternary structure, the mature envelope protein (Env) consists of a homotrimer of non-covalently associated gp120-gp41 heterodimers. The resulting complex protrudes from the virus surface as a spike. There seems to be as few as 10 spikes on the average virion. Interacts with host CD4, CCR5 and CXCR4. Gp120 also interacts with the C-type lectins CD209/DC-SIGN and CLEC4M/DC-SIGNR (collectively referred to as DC-SIGN(R)). Gp120 and gp41 interact with GalCer. Gp120 interacts with host ITGA4/ITGB7 complex; on CD4+ T-cells, this interaction results in rapid activation of integrin ITGAL/LFA-1, which facilitates efficient cell-to-cell spreading of HIV-1. Gp120 interacts with cell-associated heparan sulfate; this interaction increases virus infectivity on permissive cells and may be involved in infection of CD4- cells. The mature envelope protein (Env) consists of a homotrimer of non-covalently associated gp120-gp41 heterodimers. The resulting complex protrudes from the virus surface as a spike. There seems to be as few as 10 spikes on the average virion. In terms of processing, highly glycosylated by host. The high number of glycan on the protein is reffered to as 'glycan shield' because it contributes to hide protein sequence from adaptive immune system. Palmitoylation of the transmembrane protein and of Env polyprotein (prior to its proteolytic cleavage) is essential for their association with host cell membrane lipid rafts. Palmitoylation is therefore required for envelope trafficking to classical lipid rafts, but not for viral replication. Post-translationally, specific enzymatic cleavages in vivo yield mature proteins. Envelope glycoproteins are synthesized as an inactive precursor that is heavily N-glycosylated and processed likely by host cell furin in the Golgi to yield the mature SU and TM proteins. The cleavage site between SU and TM requires the minimal sequence [KR]-X-[KR]-R. About 2 of the 9 disulfide bonds of gp41 are reduced by P4HB/PDI, following binding to CD4 receptor.

It is found in the virion membrane. It localises to the host cell membrane. The protein localises to the host endosome membrane. Oligomerizes in the host endoplasmic reticulum into predominantly trimers. In a second time, gp160 transits in the host Golgi, where glycosylation is completed. The precursor is then proteolytically cleaved in the trans-Golgi and thereby activated by cellular furin or furin-like proteases to produce gp120 and gp41. Its function is as follows. Attaches the virus to the host lymphoid cell by binding to the primary receptor CD4. This interaction induces a structural rearrangement creating a high affinity binding site for a chemokine coreceptor like CXCR4 and/or CCR5. Acts as a ligand for CD209/DC-SIGN and CLEC4M/DC-SIGNR, which are respectively found on dendritic cells (DCs), and on endothelial cells of liver sinusoids and lymph node sinuses. These interactions allow capture of viral particles at mucosal surfaces by these cells and subsequent transmission to permissive cells. HIV subverts the migration properties of dendritic cells to gain access to CD4+ T-cells in lymph nodes. Virus transmission to permissive T-cells occurs either in trans (without DCs infection, through viral capture and transmission), or in cis (following DCs productive infection, through the usual CD4-gp120 interaction), thereby inducing a robust infection. In trans infection, bound virions remain infectious over days and it is proposed that they are not degraded, but protected in non-lysosomal acidic organelles within the DCs close to the cell membrane thus contributing to the viral infectious potential during DCs' migration from the periphery to the lymphoid tissues. On arrival at lymphoid tissues, intact virions recycle back to DCs' cell surface allowing virus transmission to CD4+ T-cells. In terms of biological role, acts as a class I viral fusion protein. Under the current model, the protein has at least 3 conformational states: pre-fusion native state, pre-hairpin intermediate state, and post-fusion hairpin state. During fusion of viral and target intracellular membranes, the coiled coil regions (heptad repeats) assume a trimer-of-hairpins structure, positioning the fusion peptide in close proximity to the C-terminal region of the ectodomain. The formation of this structure appears to drive apposition and subsequent fusion of viral and target cell membranes. Complete fusion occurs in host cell endosomes and is dynamin-dependent, however some lipid transfer might occur at the plasma membrane. The virus undergoes clathrin-dependent internalization long before endosomal fusion, thus minimizing the surface exposure of conserved viral epitopes during fusion and reducing the efficacy of inhibitors targeting these epitopes. Membranes fusion leads to delivery of the nucleocapsid into the cytoplasm. This Human immunodeficiency virus type 1 group M subtype G (isolate 92NG083) (HIV-1) protein is Envelope glycoprotein gp160.